The following is a 331-amino-acid chain: Protein Brevis radix-like 1 (331 aa).

Positions 1-111 (MFTCINCTKM…HQSGRPDSRF (111 aa)) are disordered. 2 stretches are compositionally biased toward polar residues: residues 25–41 (STTP…TTQI) and 48–66 (FSGS…SSNL). One can recognise a BRX 1 domain in the interval 137-192 (KEWMAQVEPGVHITFVSLPSGGNDLKRIRFSREVFDKWQAQRWWGENYDRIVELYN). Disordered stretches follow at residues 201–246 (LQTP…VPHH) and 258–279 (TTSS…GEWV). The segment covering 221–235 (DSARESRDWTQRDNN) has biased composition (basic and acidic residues). In terms of domain architecture, BRX 2 spans 276-331 (GEWVEEDEPGVYITIRQLPDGTRELRRVRFSRERFGEVHAKTWWEQNRDRIQTQYL).

Belongs to the BRX family. In terms of assembly, heterodimer with BRXL1. As to expression, expressed in roots.

It localises to the nucleus. In terms of biological role, may act as a regulator of cell proliferation and elongation in the root. The protein is Protein Brevis radix-like 1 (BRXL1) of Arabidopsis thaliana (Mouse-ear cress).